The sequence spans 802 residues: Phenylalanine--tRNA ligase beta subunit (802 aa).

A tRNA-binding domain is found at 39-154 (AEGLSKLVVG…EDAVPGDSIF (116 aa)). Residues 407–482 (TEPVQVSTSL…RIYGYEKLPT (76 aa)) enclose the B5 domain. 4 residues coordinate Mg(2+): Asp-460, Asp-466, Glu-469, and Glu-470. The FDX-ACB domain maps to 709–802 (TKFPAVSRDI…LTEKVEAEVR (94 aa)).

This sequence belongs to the phenylalanyl-tRNA synthetase beta subunit family. Type 1 subfamily. As to quaternary structure, tetramer of two alpha and two beta subunits. Mg(2+) serves as cofactor.

It is found in the cytoplasm. It carries out the reaction tRNA(Phe) + L-phenylalanine + ATP = L-phenylalanyl-tRNA(Phe) + AMP + diphosphate + H(+). In Streptococcus thermophilus (strain CNRZ 1066), this protein is Phenylalanine--tRNA ligase beta subunit.